We begin with the raw amino-acid sequence, 7192 residues long: Nonribosomal peptide synthetase gloA (7192 aa).

Positions 1–48 (MTPSRSLENGEKQMNWNESPQTASPKNVLRDSNSNGNYVNGHGTNING) are enriched in polar residues. Residues 1–52 (MTPSRSLENGEKQMNWNESPQTASPKNVLRDSNSNGNYVNGHGTNINGDGSD) are disordered. The Carrier 1 domain maps to 105–181 (HSTSKFKEEF…GLFATANFRP (77 aa)). S142 carries the post-translational modification O-(pantetheine 4'-phosphoryl)serine. The interval 239–634 (EDVYPCTPLQ…TYTVQCLCNP (396 aa)) is condensation 1. Positions 675-1047 (QDQVNIQPAK…SLMYLGRCDS (373 aa)) are adenylation 1. A Carrier 2 domain is found at 1190 to 1266 (APSTDAEKQV…DLAFVIQRRL (77 aa)). S1227 carries the O-(pantetheine 4'-phosphoryl)serine modification. The tract at residues 1316-1736 (EDIYPCTPLQ…MSWLSDYDEE (421 aa)) is condensation 2. The adenylation 2 stretch occupies residues 1758–2154 (QEQTKLRPNA…GRRDTQIKIR (397 aa)). The 77-residue stretch at 2288–2364 (APSTREECLV…ELAELLAKRS (77 aa)) folds into the Carrier 3 domain. S2325 is modified (O-(pantetheine 4'-phosphoryl)serine). The interval 2407-2829 (VEDVYPCTPL…LIAPEDQEQI (423 aa)) is condensation 3. The interval 2849–3245 (YKQVMARPQA…GRRDDQIKIR (397 aa)) is adenylation 3. Residues 3378–3455 (TPSTKMEKVI…DLASVMTEHR (78 aa)) form the Carrier 4 domain. S3415 bears the O-(pantetheine 4'-phosphoryl)serine mark. The condensation 4 stretch occupies residues 3502–3891 (EDIYPCTALQ…NGVLDQFVYI (390 aa)). Residues 3920-4320 (QEQALARPTA…ARRDMQVKIR (401 aa)) form an adenylation 4 region. Residues 4453-4529 (LPSTQVELQL…ELAVILDGRK (77 aa)) form the Carrier 5 domain. Residue S4490 is modified to O-(pantetheine 4'-phosphoryl)serine. The tract at residues 4574 to 4971 (EDIYPCTPLQ…QFEYVVQKFH (398 aa)) is condensation 5. The adenylation 5 stretch occupies residues 5013–5414 (DDHVAARPMA…GRQDLQVKIR (402 aa)). The Carrier 6 domain occupies 5551-5627 (APDTDLGRLI…DLVNTLSNRS (77 aa)). Position 5588 is an O-(pantetheine 4'-phosphoryl)serine (S5588). Residues 5674 to 6071 (EDVYPSTPLQ…CVVQRILTQS (398 aa)) form a condensation 6 region. Residues 6111–6507 (QAQVKKSPAA…GRRDLQVKIR (397 aa)) are adenylation 6. The Carrier 7 domain occupies 6645 to 6721 (NPSTTMERQL…DLAVVLTDRL (77 aa)). At S6682 the chain carries O-(pantetheine 4'-phosphoryl)serine. A condensation 7 region spans residues 6795 to 7178 (NGPCDTRALK…NPLSPVKQVL (384 aa)).

This sequence belongs to the NRP synthetase family.

It participates in mycotoxin biosynthesis. Nonribosomal peptide synthetase; part of the gene cluster that mediates the biosynthesis of pneumocandins, lipohexapeptides of the echinocandin family that prevent fungal cell wall formation by non-competitive inhibition of beta-1,3-glucan synthase. The 10,12-dimethylmyristoyl side chain is synthesized by the reducing polyketide synthase gloL/GLPKS4. The thioesterase gloN/GLHYD exclusively interacts with gloL/GLPKS4 to maintain turnover of the polyketide side chain. The 10R,12S-dimethylmyristic acid is then transferred to the first thiolation domain of the nonribosomal peptide synthetase gloA/GLNRPS4 by the acyl-AMP ligase gloD/GLligase, followed by its acylation to L-ornithine to trigger elongation of the cyclic hexapeptide. L-ornithine, 4R-hydroxyl-L-proline (generated from L-proline by the dioxygenase gloF/GLOXY2), 3S-hydroxyl-L-homotyrosine (generated by gloG/GLHtyB, gloH/GLHtyA, gloI/GLHtyC, gloJ/GLHtyD and hydroxylated at C-3 by the dioxygenase gloM/GLOXY1), 3R-hydroxyl-L-glutamine (generated from L-glutamine probably by the dioxygenase gloE/GLOXY3) and 3S-hydroxyl-L-proline (generated from L-proline by the dioxygenase gloF/GLOXY2 to yield pneumocandin B0), or 3S-hydroxyl-4S-methyl-L-proline (generated from L-leucine by the dioxygenase gloC/GLOXY4 to yield pneumocandin A0) are sequentially added to the growing chain. The last C domain of gloA/GLNRPS4 is proposed to be responsible for cyclization by condensation to form the peptide bond between L-ornithine and 3S-hydroxyl-4S-methyl-L-proline (for pneumocandin A0) or 3S-hydroxyl-L-proline (for pneumocandin B0). Finally, the subsequent C-4 hydroxylation of 3S-hydroxyl-L-homotyrosine and L-ornithine dihydroxylation at C-4 and C-5 are performed by the cytochrome P450 monooxygenases gloP/GLP450-1 and gloO/GLP450-2, respectively. This chain is Nonribosomal peptide synthetase gloA, found in Glarea lozoyensis (strain ATCC 20868 / MF5171).